Consider the following 143-residue polypeptide: Nucleoside diphosphate kinase (143 aa).

Lysine 11, phenylalanine 59, arginine 87, threonine 93, arginine 104, and asparagine 114 together coordinate ATP. The active-site Pros-phosphohistidine intermediate is histidine 117.

The protein belongs to the NDK family. As to quaternary structure, homotetramer. It depends on Mg(2+) as a cofactor.

Its subcellular location is the cytoplasm. It catalyses the reaction a 2'-deoxyribonucleoside 5'-diphosphate + ATP = a 2'-deoxyribonucleoside 5'-triphosphate + ADP. The enzyme catalyses a ribonucleoside 5'-diphosphate + ATP = a ribonucleoside 5'-triphosphate + ADP. In terms of biological role, major role in the synthesis of nucleoside triphosphates other than ATP. The ATP gamma phosphate is transferred to the NDP beta phosphate via a ping-pong mechanism, using a phosphorylated active-site intermediate. The polypeptide is Nucleoside diphosphate kinase (Alcanivorax borkumensis (strain ATCC 700651 / DSM 11573 / NCIMB 13689 / SK2)).